The sequence spans 248 residues: Granzyme B (248 aa).

The signal sequence occupies residues 1 to 18; the sequence is MKLLLLLLSFSLAPKTEA. A propeptide spans 19 to 20 (activation peptide); that stretch reads GE. Positions 21–246 constitute a Peptidase S1 domain; it reads IIGGHEAKPH…FLSWIKKTMK (226 aa). C50 and C66 are oxidised to a cystine. Active-site charge relay system residues include H65 and D109. Cystine bridges form between C143/C210 and C174/C189. S204 functions as the Charge relay system in the catalytic mechanism.

Belongs to the peptidase S1 family. Granzyme subfamily.

It localises to the secreted. It is found in the cytolytic granule. The enzyme catalyses Preferential cleavage: -Asp-|-Xaa- &gt;&gt; -Asn-|-Xaa- &gt; -Met-|-Xaa-, -Ser-|-Xaa-.. With respect to regulation, inactivated by the serine protease inhibitor diisopropylfluorophosphate. Abundant protease in the cytosolic granules of cytotoxic T-cells and NK-cells which activates caspase-independent pyroptosis when delivered into the target cell through the immunological synapse. It cleaves after Asp. Once delivered into the target cell, acts by catalyzing cleavage of gasdermin-E (GSDME), releasing the pore-forming moiety of GSDME, thereby triggering pyroptosis and target cell death. Seems to be linked to an activation cascade of caspases (aspartate-specific cysteine proteases) responsible for apoptosis execution. Cleaves caspase-3 and -9 (CASP3 and CASP9, respectively) to give rise to active enzymes mediating apoptosis. Cleaves and activates CASP7 in response to bacterial infection, promoting plasma membrane repair. The sequence is that of Granzyme B (Gzmb) from Rattus norvegicus (Rat).